We begin with the raw amino-acid sequence, 215 residues long: Pyrrolidone-carboxylate peptidase (215 aa).

Residues Glu78, Cys141, and His165 contribute to the active site.

Belongs to the peptidase C15 family. In terms of assembly, homotetramer.

The protein localises to the cytoplasm. It carries out the reaction Release of an N-terminal pyroglutamyl group from a polypeptide, the second amino acid generally not being Pro.. Removes 5-oxoproline from various penultimate amino acid residues except L-proline. The chain is Pyrrolidone-carboxylate peptidase from Streptococcus suis (strain 98HAH33).